The primary structure comprises 198 residues: Transmembrane protein 9B (198 aa).

Positions 1–33 (MATLWGGLLRLGSLLSLSCLALSVLLLAQLSDA) are cleaved as a signal peptide. A glycan (N-linked (GlcNAc...) asparagine) is linked at asparagine 60. A helical membrane pass occupies residues 105–125 (IIIYLSILGLLLLYMVYLTLV). Phosphoserine is present on residues serine 142 and serine 189.

This sequence belongs to the TMEM9 family. N-glycosylated.

Its subcellular location is the lysosome membrane. The protein localises to the early endosome membrane. Its function is as follows. Enhances production of pro-inflammatory cytokines induced by TNF, IL1B, and TLR ligands. Has a role in TNF activation of both the NF-kappaB and MAPK pathways. The polypeptide is Transmembrane protein 9B (TMEM9B) (Homo sapiens (Human)).